The following is a 361-amino-acid chain: Chorismate synthase (361 aa).

Arg48 serves as a coordination point for NADP(+). Residues 125–127, 238–239, Gly278, 293–297, and Arg319 each bind FMN; these read RSS, NA, and KPTSS.

The protein belongs to the chorismate synthase family. As to quaternary structure, homotetramer. The cofactor is FMNH2.

The catalysed reaction is 5-O-(1-carboxyvinyl)-3-phosphoshikimate = chorismate + phosphate. It functions in the pathway metabolic intermediate biosynthesis; chorismate biosynthesis; chorismate from D-erythrose 4-phosphate and phosphoenolpyruvate: step 7/7. Functionally, catalyzes the anti-1,4-elimination of the C-3 phosphate and the C-6 proR hydrogen from 5-enolpyruvylshikimate-3-phosphate (EPSP) to yield chorismate, which is the branch point compound that serves as the starting substrate for the three terminal pathways of aromatic amino acid biosynthesis. This reaction introduces a second double bond into the aromatic ring system. The chain is Chorismate synthase from Vibrio anguillarum (strain ATCC 68554 / 775) (Listonella anguillarum).